A 195-amino-acid polypeptide reads, in one-letter code: Putative 3-methyladenine DNA glycosylase (195 aa).

It belongs to the DNA glycosylase MPG family.

The chain is Putative 3-methyladenine DNA glycosylase from Synechococcus sp. (strain JA-3-3Ab) (Cyanobacteria bacterium Yellowstone A-Prime).